The primary structure comprises 367 residues: UDP-N-acetylglucosamine--N-acetylmuramyl-(pentapeptide) pyrophosphoryl-undecaprenol N-acetylglucosamine transferase (367 aa).

UDP-N-acetyl-alpha-D-glucosamine-binding positions include 21-23 (TGG), N129, R170, S198, and Q295.

It belongs to the glycosyltransferase 28 family. MurG subfamily.

Its subcellular location is the cell inner membrane. The enzyme catalyses di-trans,octa-cis-undecaprenyl diphospho-N-acetyl-alpha-D-muramoyl-L-alanyl-D-glutamyl-meso-2,6-diaminopimeloyl-D-alanyl-D-alanine + UDP-N-acetyl-alpha-D-glucosamine = di-trans,octa-cis-undecaprenyl diphospho-[N-acetyl-alpha-D-glucosaminyl-(1-&gt;4)]-N-acetyl-alpha-D-muramoyl-L-alanyl-D-glutamyl-meso-2,6-diaminopimeloyl-D-alanyl-D-alanine + UDP + H(+). Its pathway is cell wall biogenesis; peptidoglycan biosynthesis. Cell wall formation. Catalyzes the transfer of a GlcNAc subunit on undecaprenyl-pyrophosphoryl-MurNAc-pentapeptide (lipid intermediate I) to form undecaprenyl-pyrophosphoryl-MurNAc-(pentapeptide)GlcNAc (lipid intermediate II). The sequence is that of UDP-N-acetylglucosamine--N-acetylmuramyl-(pentapeptide) pyrophosphoryl-undecaprenol N-acetylglucosamine transferase from Synechococcus sp. (strain JA-2-3B'a(2-13)) (Cyanobacteria bacterium Yellowstone B-Prime).